The following is a 155-amino-acid chain: SsrA-binding protein (155 aa).

Belongs to the SmpB family.

Its subcellular location is the cytoplasm. Functionally, required for rescue of stalled ribosomes mediated by trans-translation. Binds to transfer-messenger RNA (tmRNA), required for stable association of tmRNA with ribosomes. tmRNA and SmpB together mimic tRNA shape, replacing the anticodon stem-loop with SmpB. tmRNA is encoded by the ssrA gene; the 2 termini fold to resemble tRNA(Ala) and it encodes a 'tag peptide', a short internal open reading frame. During trans-translation Ala-aminoacylated tmRNA acts like a tRNA, entering the A-site of stalled ribosomes, displacing the stalled mRNA. The ribosome then switches to translate the ORF on the tmRNA; the nascent peptide is terminated with the 'tag peptide' encoded by the tmRNA and targeted for degradation. The ribosome is freed to recommence translation, which seems to be the essential function of trans-translation. The protein is SsrA-binding protein of Halothermothrix orenii (strain H 168 / OCM 544 / DSM 9562).